Consider the following 75-residue polypeptide: Small ribosomal subunit protein bS18 (75 aa).

The protein belongs to the bacterial ribosomal protein bS18 family. Part of the 30S ribosomal subunit. Forms a tight heterodimer with protein bS6.

Binds as a heterodimer with protein bS6 to the central domain of the 16S rRNA, where it helps stabilize the platform of the 30S subunit. The chain is Small ribosomal subunit protein bS18 from Wigglesworthia glossinidia brevipalpis.